The sequence spans 143 residues: Transcriptional regulator MraZ (143 aa).

SpoVT-AbrB domains are found at residues 5-47 (TYTP…PRSE) and 76-119 (TDEQ…DAQA).

It belongs to the MraZ family. Forms oligomers.

The protein resides in the cytoplasm. It is found in the nucleoid. The polypeptide is Transcriptional regulator MraZ (Mycobacterium ulcerans (strain Agy99)).